We begin with the raw amino-acid sequence, 237 residues long: Riboflavin kinase (237 aa).

A disordered region spans residues Met1–Phe23. Mg(2+)-binding residues include Thr46 and Asn48. The disordered stretch occupies residues Val82–Lys126. Over residues Gln99–Gln115 the composition is skewed to low complexity. Glu158 functions as the Nucleophile in the catalytic mechanism.

It belongs to the flavokinase family. Requires Zn(2+) as cofactor. Mg(2+) is required as a cofactor.

It carries out the reaction riboflavin + ATP = FMN + ADP + H(+). It functions in the pathway cofactor biosynthesis; FMN biosynthesis; FMN from riboflavin (ATP route): step 1/1. Its function is as follows. Catalyzes the phosphorylation of riboflavin (vitamin B2) to form flavin mononucleotide (FMN) coenzyme. The chain is Riboflavin kinase (fmn1) from Neurospora crassa (strain ATCC 24698 / 74-OR23-1A / CBS 708.71 / DSM 1257 / FGSC 987).